Here is a 344-residue protein sequence, read N- to C-terminus: Dihydroorotase (344 aa).

Zn(2+)-binding residues include His14 and His16. Substrate contacts are provided by residues 16-18 (HLR) and Asn42. Positions 100, 137, and 175 each coordinate Zn(2+). Lys100 is modified (N6-carboxylysine). Residue His137 coordinates substrate. Leu220 lines the substrate pocket. Residue Asp248 participates in Zn(2+) binding. Asp248 is a catalytic residue. Residues His252 and Ala264 each contribute to the substrate site.

It belongs to the metallo-dependent hydrolases superfamily. DHOase family. Class II DHOase subfamily. As to quaternary structure, homodimer. The cofactor is Zn(2+).

The catalysed reaction is (S)-dihydroorotate + H2O = N-carbamoyl-L-aspartate + H(+). It functions in the pathway pyrimidine metabolism; UMP biosynthesis via de novo pathway; (S)-dihydroorotate from bicarbonate: step 3/3. In terms of biological role, catalyzes the reversible cyclization of carbamoyl aspartate to dihydroorotate. This Ralstonia nicotianae (strain ATCC BAA-1114 / GMI1000) (Ralstonia solanacearum) protein is Dihydroorotase.